We begin with the raw amino-acid sequence, 190 residues long: Protein GrpE (190 aa).

A disordered region spans residues Met-1–Ala-40. A compositionally biased stretch (polar residues) spans Gly-22–Ala-40.

Belongs to the GrpE family. As to quaternary structure, homodimer.

The protein resides in the cytoplasm. Its function is as follows. Participates actively in the response to hyperosmotic and heat shock by preventing the aggregation of stress-denatured proteins, in association with DnaK and GrpE. It is the nucleotide exchange factor for DnaK and may function as a thermosensor. Unfolded proteins bind initially to DnaJ; upon interaction with the DnaJ-bound protein, DnaK hydrolyzes its bound ATP, resulting in the formation of a stable complex. GrpE releases ADP from DnaK; ATP binding to DnaK triggers the release of the substrate protein, thus completing the reaction cycle. Several rounds of ATP-dependent interactions between DnaJ, DnaK and GrpE are required for fully efficient folding. In Pediococcus pentosaceus (strain ATCC 25745 / CCUG 21536 / LMG 10740 / 183-1w), this protein is Protein GrpE.